We begin with the raw amino-acid sequence, 287 residues long: Gliotoxin thiomethyltransferase GtmA (287 aa).

2 residues coordinate S-adenosyl-L-methionine: Thr27 and Ala54. The cysteines at positions 55 and 80 are disulfide-linked. The S-adenosyl-L-methionine site is built by Asp82, Met87, Asn109, Ala110, Ala126, and Arg248.

Belongs to the class I-like SAM-binding methyltransferase superfamily.

The protein resides in the cytoplasm. It catalyses the reaction a thiol + S-adenosyl-L-methionine = a methyl thioether + S-adenosyl-L-homocysteine + H(+). S-methyltransferase that catalyzes the irreversible conversion of the secondary metabolite gliotoxin to bis(methylthio)gliotoxin (BmGT). Gliotoxin, a member of the epipolythiodioxopiperazine (ETP) class of toxins, is characterized by a disulfide bridged cyclic dipeptide. Its thiol groups are essential for bioactivity, as they conjugate to sulfur-containing proteins, disturb the intracellular redox equilibrium, and generate reactive oxygen species by cycling between reduced and oxidized states. The enzyme prevents self-intoxication of the fungus by irreversible conversion of the toxic gliotoxin to a biologically inactive bis-thiomethylated derivative. Appears to negatively regulate gliotoxin biosynthesis. The chain is Gliotoxin thiomethyltransferase GtmA from Aspergillus fumigatus (strain ATCC MYA-4609 / CBS 101355 / FGSC A1100 / Af293) (Neosartorya fumigata).